Here is a 485-residue protein sequence, read N- to C-terminus: Cysteine--tRNA ligase (485 aa).

Cys27 is a Zn(2+) binding site. The 'HIGH' region signature appears at 29 to 39 (ITAYDLCHIGH). Positions 208, 233, and 237 each coordinate Zn(2+). The 'KMSKS' region signature appears at 265-269 (KMSKS). Lys268 is a binding site for ATP.

This sequence belongs to the class-I aminoacyl-tRNA synthetase family. In terms of assembly, monomer. Zn(2+) is required as a cofactor.

It is found in the cytoplasm. The catalysed reaction is tRNA(Cys) + L-cysteine + ATP = L-cysteinyl-tRNA(Cys) + AMP + diphosphate. This is Cysteine--tRNA ligase from Solidesulfovibrio magneticus (strain ATCC 700980 / DSM 13731 / RS-1) (Desulfovibrio magneticus).